A 408-amino-acid polypeptide reads, in one-letter code: Succinylornithine transaminase (408 aa).

Position 252 is an N6-(pyridoxal phosphate)lysine (Lys-252).

Belongs to the class-III pyridoxal-phosphate-dependent aminotransferase family. AstC subfamily. Requires pyridoxal 5'-phosphate as cofactor.

The catalysed reaction is N(2)-succinyl-L-ornithine + 2-oxoglutarate = N-succinyl-L-glutamate 5-semialdehyde + L-glutamate. It participates in amino-acid degradation; L-arginine degradation via AST pathway; L-glutamate and succinate from L-arginine: step 3/5. Catalyzes the transamination of N(2)-succinylornithine and alpha-ketoglutarate into N(2)-succinylglutamate semialdehyde and glutamate. Can also act as an acetylornithine aminotransferase. This chain is Succinylornithine transaminase, found in Salmonella enteritidis PT4 (strain P125109).